The following is a 308-amino-acid chain: Aldo-keto reductase AKR2E4 (308 aa).

Residues 22 to 29 and D53 contribute to the NADP(+) site; that span reads GTGRGTAK. Y58 functions as the Proton donor in the catalytic mechanism. NADP(+) is bound by residues 158–159, R215, and 259–269; these read SN and KSTNKQRIAQN.

Belongs to the short-chain dehydrogenases/reductases (SDR) family. Detected in hemolymph (at protein level). Detected in larval ovary.

Its activity is regulated as follows. Subject to substrate inhibition by high levels of 3-dehydroecdysone. Functionally, NADP-dependent oxidoreductase with high 3-dehydroecdysone reductase activity. May play a role in the regulation of molting. Has lower activity with phenylglyoxal and isatin (in vitro). Has no activity with NADH as cosubstrate. Has no activity with nitrobenzaldehyde and 3-hydroxybenzaldehyde. This Bombyx mori (Silk moth) protein is Aldo-keto reductase AKR2E4 (akr2e).